The chain runs to 198 residues: MYAVLTAIIAYLIGCINNAYIFTKYTRNIDIRNYGSGNAGATNVLRVLGYKAAAPVFALDVLKGVIAVLIGKYLMGNTGAMIAGIAVVCGHNWPVFLKFRGGKGIATSVGVVMTVSPLLGLIALAIGVTVIVLTKYVSLGSITGSVTFVLLNAIFWNSTQIFIFSLILASLAIFQHRSNIKRLLAGTESKLGQKTEIK.

5 helical membrane passes run 2–22 (YAVLTAIIAYLIGCINNAYIF), 48–70 (LGYKAAAPVFALDVLKGVIAVLI), 75–97 (MGNTGAMIAGIAVVCGHNWPVFL), 111–131 (VVMTVSPLLGLIALAIGVTVI), and 154–174 (IFWNSTQIFIFSLILASLAIF).

The protein belongs to the PlsY family. In terms of assembly, probably interacts with PlsX.

It is found in the cell membrane. It carries out the reaction an acyl phosphate + sn-glycerol 3-phosphate = a 1-acyl-sn-glycero-3-phosphate + phosphate. Its pathway is lipid metabolism; phospholipid metabolism. In terms of biological role, catalyzes the transfer of an acyl group from acyl-phosphate (acyl-PO(4)) to glycerol-3-phosphate (G3P) to form lysophosphatidic acid (LPA). This enzyme utilizes acyl-phosphate as fatty acyl donor, but not acyl-CoA or acyl-ACP. This chain is Glycerol-3-phosphate acyltransferase, found in Thermoanaerobacter sp. (strain X514).